The following is a 146-amino-acid chain: D-aminoacyl-tRNA deacylase (146 aa).

A Gly-cisPro motif, important for rejection of L-amino acids motif is present at residues 137–138 (GP).

It belongs to the DTD family. Homodimer.

The protein localises to the cytoplasm. It carries out the reaction glycyl-tRNA(Ala) + H2O = tRNA(Ala) + glycine + H(+). The enzyme catalyses a D-aminoacyl-tRNA + H2O = a tRNA + a D-alpha-amino acid + H(+). Functionally, an aminoacyl-tRNA editing enzyme that deacylates mischarged D-aminoacyl-tRNAs. Also deacylates mischarged glycyl-tRNA(Ala), protecting cells against glycine mischarging by AlaRS. Acts via tRNA-based rather than protein-based catalysis; rejects L-amino acids rather than detecting D-amino acids in the active site. By recycling D-aminoacyl-tRNA to D-amino acids and free tRNA molecules, this enzyme counteracts the toxicity associated with the formation of D-aminoacyl-tRNA entities in vivo and helps enforce protein L-homochirality. This is D-aminoacyl-tRNA deacylase from Psychrobacter sp. (strain PRwf-1).